We begin with the raw amino-acid sequence, 214 residues long: NADH-quinone oxidoreductase subunit C (214 aa).

Belongs to the complex I 30 kDa subunit family. As to quaternary structure, NDH-1 is composed of 14 different subunits. Subunits NuoB, C, D, E, F, and G constitute the peripheral sector of the complex.

Its subcellular location is the cell inner membrane. The catalysed reaction is a quinone + NADH + 5 H(+)(in) = a quinol + NAD(+) + 4 H(+)(out). Its function is as follows. NDH-1 shuttles electrons from NADH, via FMN and iron-sulfur (Fe-S) centers, to quinones in the respiratory chain. The immediate electron acceptor for the enzyme in this species is believed to be ubiquinone. Couples the redox reaction to proton translocation (for every two electrons transferred, four hydrogen ions are translocated across the cytoplasmic membrane), and thus conserves the redox energy in a proton gradient. This chain is NADH-quinone oxidoreductase subunit C, found in Francisella tularensis subsp. holarctica (strain LVS).